Consider the following 158-residue polypeptide: Proteinase inhibitor type-2 (158 aa).

Positions 1–24 (MAIHKEVSFLAYLLVLGMLLFVSA) are cleaved as a signal peptide. 2 repeat units span residues 29-86 (DAKA…HPKN) and 87-146 (PKAC…IEPK). Disulfide bonds link Cys33/Cys121, Cys37/Cys117, Cys45/Cys127, Cys57/Cys94, Cys60/Cys78, Cys61/Cys90, Cys67/Cys103, and Cys120/Cys138.

It belongs to the protease inhibitor I20 (potato type II proteinase inhibitor) family.

This Solanum tuberosum (Potato) protein is Proteinase inhibitor type-2.